The sequence spans 164 residues: Protein-export protein SecB (164 aa).

This sequence belongs to the SecB family. In terms of assembly, homotetramer, a dimer of dimers. One homotetramer interacts with 1 SecA dimer.

It localises to the cytoplasm. One of the proteins required for the normal export of preproteins out of the cell cytoplasm. It is a molecular chaperone that binds to a subset of precursor proteins, maintaining them in a translocation-competent state. It also specifically binds to its receptor SecA. The protein is Protein-export protein SecB of Janthinobacterium sp. (strain Marseille) (Minibacterium massiliensis).